Consider the following 114-residue polypeptide: Large ribosomal subunit protein bL19 (114 aa).

It belongs to the bacterial ribosomal protein bL19 family.

Functionally, this protein is located at the 30S-50S ribosomal subunit interface and may play a role in the structure and function of the aminoacyl-tRNA binding site. This chain is Large ribosomal subunit protein bL19, found in Listeria welshimeri serovar 6b (strain ATCC 35897 / DSM 20650 / CCUG 15529 / CIP 8149 / NCTC 11857 / SLCC 5334 / V8).